A 407-amino-acid polypeptide reads, in one-letter code: uncharacterized protein (407 aa).

The protein belongs to the peptidase U32 family.

This is an uncharacterized protein from Methanocaldococcus jannaschii (strain ATCC 43067 / DSM 2661 / JAL-1 / JCM 10045 / NBRC 100440) (Methanococcus jannaschii).